The following is a 136-amino-acid chain: MARTKQTARKSTGGKAPRKQLASKAARKSAPSTGGVKKPHRYKPGTVALREIRRYQKSTELLIRKLPFQRLVREIAQDFKSDLRFQSSAIGALQESVESYLVSLFEDTNLCAIHAKRVTIQSKDIQLARRLRGERN.

Positions 1–43 (MARTKQTARKSTGGKAPRKQLASKAARKSAPSTGGVKKPHRYK) are disordered. 2 positions are modified to N6,N6,N6-trimethyllysine; alternate: K5 and K10. K5 is subject to N6,N6-dimethyllysine; alternate. K5 carries the post-translational modification N6-methyllysine; alternate. K10 carries the N6-acetyllysine; alternate modification. Position 11 is a phosphoserine (S11). The residue at position 15 (K15) is an N6,N6-dimethyllysine; alternate. Residues K15, K19, K24, K28, and K37 each carry the N6-methyllysine; alternate modification. K15, K19, K24, K28, and K37 each carry N6-acetyllysine; alternate. N6,N6,N6-trimethyllysine; alternate is present on residues K28 and K37. An N6,N6-dimethyllysine; alternate mark is found at K28 and K37. An N6-acetyllysine mark is found at K57 and K65. K80 bears the N6,N6,N6-trimethyllysine; alternate mark. At K80 the chain carries N6,N6-dimethyllysine; alternate. K80 bears the N6-methyllysine; alternate mark.

Belongs to the histone H3 family. The nucleosome is a histone octamer containing two molecules each of H2A, H2B, H3 and H4 assembled in one H3-H4 heterotetramer and two H2A-H2B heterodimers. The octamer wraps approximately 147 bp of DNA. In terms of processing, phosphorylated to form H3S10ph. H3S10ph promotes subsequent H3K14ac formation and is required for transcriptional activation through TBP recruitment to the promoters. Post-translationally, mono-, di- and trimethylated by the COMPASS complex to form H3K4me1/2/3. H3K4me activates gene expression by regulating transcription elongation and plays a role in telomere length maintenance. H3K4me enrichment correlates with transcription levels, and occurs in a 5' to 3' gradient with H3K4me3 enrichment at the 5'-end of genes, shifting to H3K4me2 and then H3K4me1. Trimethylated by methyltransferase dim-5 to form H3K9me3. H3K9me3, but not H3K9me2, marks chromatin regions for cytosine methylation. Methylated by set-2 to form H3K36me. H3K36me represses gene expression. Methylated by dot-1 to form H3K79me. H3K79me is required for association of SIR proteins with telomeric regions and for telomeric silencing. The COMPASS-mediated formation of H3K4me2/3 and the dot-1-mediated formation of H3K79me require H2BK123ub1. Acetylation of histone H3 leads to transcriptional activation. H3K14ac formation by gcn-5 is promoted by H3S10ph. H3K14ac can also be formed by esa-1. H3K56ac formation occurs predominantly in newly synthesized H3 molecules during G1, S and G2/M of the cell cycle and may be involved in DNA repair.

Its subcellular location is the nucleus. The protein resides in the chromosome. Core component of nucleosome. Nucleosomes wrap and compact DNA into chromatin, limiting DNA accessibility to the cellular machineries which require DNA as a template. Histones thereby play a central role in transcription regulation, DNA repair, DNA replication and chromosomal stability. DNA accessibility is regulated via a complex set of post-translational modifications of histones, also called histone code, and nucleosome remodeling. The sequence is that of Histone H3 (hh3) from Neurospora crassa (strain ATCC 24698 / 74-OR23-1A / CBS 708.71 / DSM 1257 / FGSC 987).